We begin with the raw amino-acid sequence, 540 residues long: Protein GDAP2 homolog (540 aa).

A Macro domain is found at 56–235 (RSPFPLCKDV…TYEVLAPLYF (180 aa)). In terms of domain architecture, CRAL-TRIO spans 371-528 (QVEDLTEVSG…YITEYDMATN (158 aa)).

The protein belongs to the GDAP2 family.

The chain is Protein GDAP2 homolog from Drosophila melanogaster (Fruit fly).